The sequence spans 65 residues: Small ribosomal subunit protein uS10 (65 aa).

This sequence belongs to the universal ribosomal protein uS10 family. In terms of assembly, part of the 30S ribosomal subunit.

Functionally, involved in the binding of tRNA to the ribosomes. The polypeptide is Small ribosomal subunit protein uS10 (rps10) (Desulfurococcus mucosus (Desulfurococcus mobilis)).